Here is a 171-residue protein sequence, read N- to C-terminus: Ribosome maturation factor RimP (171 aa).

This sequence belongs to the RimP family.

Its subcellular location is the cytoplasm. Required for maturation of 30S ribosomal subunits. This chain is Ribosome maturation factor RimP, found in Oleidesulfovibrio alaskensis (strain ATCC BAA-1058 / DSM 17464 / G20) (Desulfovibrio alaskensis).